The following is a 247-amino-acid chain: Triosephosphate isomerase (247 aa).

Substrate is bound at residue 9–11 (NWK). H93 acts as the Electrophile in catalysis. E163 acts as the Proton acceptor in catalysis. Substrate-binding positions include G169, S209, and 230–231 (GG).

The protein belongs to the triosephosphate isomerase family. As to quaternary structure, homodimer.

Its subcellular location is the cytoplasm. The enzyme catalyses D-glyceraldehyde 3-phosphate = dihydroxyacetone phosphate. Its pathway is carbohydrate biosynthesis; gluconeogenesis. It participates in carbohydrate degradation; glycolysis; D-glyceraldehyde 3-phosphate from glycerone phosphate: step 1/1. Involved in the gluconeogenesis. Catalyzes stereospecifically the conversion of dihydroxyacetone phosphate (DHAP) to D-glyceraldehyde-3-phosphate (G3P). The protein is Triosephosphate isomerase of Dinoroseobacter shibae (strain DSM 16493 / NCIMB 14021 / DFL 12).